Consider the following 454-residue polypeptide: GTPase Obg (454 aa).

Residues 2 to 159 enclose the Obg domain; sequence SDFVDEAVLH…VDIRLELKTI (158 aa). The interval 60–87 is disordered; it reads YQRRPHRKAENGAPGQGSNRSGASGADL. One can recognise an OBG-type G domain in the interval 160 to 335; that stretch reads ADVGLVGFPS…LAYALGEQVA (176 aa). Residues 166 to 173, 191 to 195, 212 to 215, 287 to 290, and 316 to 318 contribute to the GTP site; these read GFPSAGKS, FTTLV, DVPG, NKID, and SAA. Mg(2+) is bound by residues serine 173 and threonine 193. Residues 353 to 435 form the OCT domain; that stretch reads PREIGEIPFQ…DNPVVFDWDP (83 aa).

The protein belongs to the TRAFAC class OBG-HflX-like GTPase superfamily. OBG GTPase family. Monomer. Mg(2+) serves as cofactor.

The protein resides in the cytoplasm. An essential GTPase which binds GTP, GDP and possibly (p)ppGpp with moderate affinity, with high nucleotide exchange rates and a fairly low GTP hydrolysis rate. Plays a role in control of the cell cycle, stress response, ribosome biogenesis and in those bacteria that undergo differentiation, in morphogenesis control. The sequence is that of GTPase Obg from Thermobifida fusca (strain YX).